We begin with the raw amino-acid sequence, 459 residues long: Cell division protein FtsZ (459 aa).

GTP contacts are provided by residues 25 to 29 (GAGSN), 112 to 114 (GTG), E143, R147, and D191. Disordered stretches follow at residues 383-405 (DQAPNSTNDDMEPRVSLTNDAGE) and 427-459 (IPERKNVVVGMPDEETKESDIHDIPAFLRKKRD).

It belongs to the FtsZ family. Homodimer. Polymerizes to form a dynamic ring structure in a strictly GTP-dependent manner. Interacts directly with several other division proteins.

It localises to the cytoplasm. Functionally, essential cell division protein that forms a contractile ring structure (Z ring) at the future cell division site. The regulation of the ring assembly controls the timing and the location of cell division. One of the functions of the FtsZ ring is to recruit other cell division proteins to the septum to produce a new cell wall between the dividing cells. Binds GTP and shows GTPase activity. This chain is Cell division protein FtsZ, found in Rickettsia bellii (strain RML369-C).